The primary structure comprises 171 residues: MTRQSTYSRDQLLASARGELFAPDSGRLPNDPMLMFDRITEISDAGGTHGKGLIRAELDIRPDLWFFGCHFIGDPVMPGCLGLDAMWQLTGFFLTWIGAPGRGRALGCGEVKFTGQVLPSARLVRYEVDVSRVINRKLVMAQTDARMLVDGREIYTAKDLRVGMFTSTENF.

The active site involves histidine 70.

Belongs to the thioester dehydratase family. FabA subfamily. As to quaternary structure, homodimer.

The protein resides in the cytoplasm. The catalysed reaction is a (3R)-hydroxyacyl-[ACP] = a (2E)-enoyl-[ACP] + H2O. It carries out the reaction (3R)-hydroxydecanoyl-[ACP] = (2E)-decenoyl-[ACP] + H2O. The enzyme catalyses (2E)-decenoyl-[ACP] = (3Z)-decenoyl-[ACP]. It functions in the pathway lipid metabolism; fatty acid biosynthesis. Necessary for the introduction of cis unsaturation into fatty acids. Catalyzes the dehydration of (3R)-3-hydroxydecanoyl-ACP to E-(2)-decenoyl-ACP and then its isomerization to Z-(3)-decenoyl-ACP. Can catalyze the dehydratase reaction for beta-hydroxyacyl-ACPs with saturated chain lengths up to 16:0, being most active on intermediate chain length. The polypeptide is 3-hydroxydecanoyl-[acyl-carrier-protein] dehydratase (Xanthomonas euvesicatoria pv. vesicatoria (strain 85-10) (Xanthomonas campestris pv. vesicatoria)).